The chain runs to 257 residues: Flap endonuclease Xni (257 aa).

Asp-109 contacts Mg(2+). The 5'-3' exonuclease domain maps to 165-254 (VKPEQLADYW…GFNLQDIRYE (90 aa)). Residues Leu-176, Pro-185, Ile-187, and Ile-190 each coordinate K(+). The tract at residues 189 to 194 (GIGPKA) is interaction with DNA.

This sequence belongs to the Xni family. Mg(2+) serves as cofactor. Requires K(+) as cofactor.

Has flap endonuclease activity. During DNA replication, flap endonucleases cleave the 5'-overhanging flap structure that is generated by displacement synthesis when DNA polymerase encounters the 5'-end of a downstream Okazaki fragment. In Vibrio atlanticus (strain LGP32) (Vibrio splendidus (strain Mel32)), this protein is Flap endonuclease Xni.